The primary structure comprises 89 residues: Small ribosomal subunit protein uS14A (89 aa).

The protein belongs to the universal ribosomal protein uS14 family. In terms of assembly, contacts proteins S3 and S10. Part of the 30S ribosomal subunit.

Functionally, binds 16S rRNA, required for the assembly of 30S particles and may also be responsible for determining the conformation of the 16S rRNA at the A site. Its function is as follows. Non-essential protein. A second form of uS14, it can integrate into the 30S subunit where it partially compensates for loss of the major uS14 protein (AC P12878) in restoring 70S formation, although it does not seem to be incorporated into the ribosome as well as the major uS14. The sequence is that of Small ribosomal subunit protein uS14A from Bacillus subtilis (strain 168).